Reading from the N-terminus, the 151-residue chain is Large-conductance mechanosensitive channel (151 aa).

The next 2 helical transmembrane spans lie at 12–32 (GNIVDLAVAVVIGTAFTALVT) and 71–91 (VLLSAAINFFLIAFAVYFLVV). Residues 122–151 (AQTNGDSPGRHGGRGTPSPTDGPRASTESQ) form a disordered region.

This sequence belongs to the MscL family. As to quaternary structure, homopentamer.

It localises to the cell membrane. Its function is as follows. Channel that opens in response to stretch forces in the membrane lipid bilayer. May participate in the regulation of osmotic pressure changes within the cell. This Mycobacterium tuberculosis (strain CDC 1551 / Oshkosh) protein is Large-conductance mechanosensitive channel.